The sequence spans 858 residues: DNA mismatch repair protein MutS (858 aa).

603 to 610 is a binding site for ATP; sequence GPNMSGKS.

This sequence belongs to the DNA mismatch repair MutS family.

Functionally, this protein is involved in the repair of mismatches in DNA. It is possible that it carries out the mismatch recognition step. This protein has a weak ATPase activity. The chain is DNA mismatch repair protein MutS from Streptococcus agalactiae serotype Ia (strain ATCC 27591 / A909 / CDC SS700).